A 103-amino-acid chain; its full sequence is Histone H4 type VIII (103 aa).

Residues 1–14 (MSGRGKGGKGLGKG) are compositionally biased toward gly residues. The interval 1–20 (MSGRGKGGKGLGKGGAKRHR) is disordered. At serine 2 the chain carries N-acetylserine. Serine 2 carries the post-translational modification Phosphoserine. Arginine 4 carries the post-translational modification Asymmetric dimethylarginine; by PRMT1; alternate. Position 4 is a citrulline; alternate (arginine 4). Residue arginine 4 is modified to Omega-N-methylarginine; by PRMT1; alternate. A Symmetric dimethylarginine; by PRMT5 and PRMT7; alternate modification is found at arginine 4. Lysine 6, lysine 9, lysine 13, and lysine 17 each carry N6-(2-hydroxyisobutyryl)lysine; alternate. Residue lysine 6 is modified to N6-acetyl-N6-methyllysine; alternate. 4 positions are modified to N6-acetyllysine: lysine 6, lysine 9, lysine 13, and lysine 17. N6-butyryllysine; alternate occurs at positions 6, 9, 13, and 17. At lysine 6 the chain carries N6-glutaryllysine; alternate. 4 positions are modified to N6-lactoyllysine; alternate: lysine 6, lysine 9, lysine 13, and lysine 17. Residue lysine 9 is modified to N6-propionyllysine; alternate. The residue at position 13 (lysine 13) is an N6-acetyl-N6-methyllysine; alternate. An N6-glutaryllysine; alternate modification is found at lysine 13. The residue at position 13 (lysine 13) is an N6-methyllysine; alternate. Position 17 is an N6-propionyllysine; alternate (lysine 17). Lysine 21 is subject to N6-methyllysine; alternate. Position 21 is an N6,N6,N6-trimethyllysine; alternate (lysine 21). Position 21 is an N6,N6-dimethyllysine; alternate (lysine 21). Lysine 32 and lysine 45 each carry N6-(2-hydroxyisobutyryl)lysine; alternate. Lysine 32 carries the post-translational modification N6-acetyllysine. N6-butyryllysine; alternate is present on residues lysine 32 and lysine 45. Residue lysine 32 is modified to N6-glutaryllysine; alternate. N6-lactoyllysine; alternate is present on lysine 32. Residues lysine 32 and lysine 45 each carry the N6-propionyllysine; alternate modification. Lysine 32 bears the N6-succinyllysine; alternate mark. Lysine 32 participates in a covalent cross-link: Glycyl lysine isopeptide (Lys-Gly) (interchain with G-Cter in UFM1); alternate. At serine 48 the chain carries Phosphoserine. At tyrosine 52 the chain carries Phosphotyrosine. An N6-acetyllysine modification is found at lysine 60. An N6-glutaryllysine; alternate mark is found at lysine 60, lysine 78, and lysine 80. The residue at position 60 (lysine 60) is an N6-(2-hydroxyisobutyryl)lysine. An N6-(2-hydroxyisobutyryl)lysine; alternate mark is found at lysine 78 and lysine 80. An N6-butyryllysine; alternate mark is found at lysine 78 and lysine 80. N6-lactoyllysine; alternate is present on lysine 78. Residues lysine 78 and lysine 80 each carry the N6-propionyllysine; alternate modification. Lysine 78 carries the post-translational modification N6-succinyllysine. An N6-acetyllysine modification is found at lysine 80. The residue at position 89 (tyrosine 89) is a Phosphotyrosine. At lysine 92 the chain carries N6-(2-hydroxyisobutyryl)lysine; alternate. Position 92 is an N6-butyryllysine; alternate (lysine 92). Lysine 92 carries the N6-glutaryllysine; alternate modification. The residue at position 92 (lysine 92) is an N6-lactoyllysine; alternate. Lysine 92 carries the post-translational modification N6-propionyllysine; alternate. An N6-succinyllysine; alternate modification is found at lysine 92. Lysine 92 bears the N6-acetyllysine; alternate mark. Lysine 92 is covalently cross-linked (Glycyl lysine isopeptide (Lys-Gly) (interchain with G-Cter in ubiquitin); alternate).

It belongs to the histone H4 family. In terms of assembly, the nucleosome is a histone octamer containing two molecules each of H2A, H2B, H3 and H4 assembled in one H3-H4 heterotetramer and two H2A-H2B heterodimers. The octamer wraps approximately 147 bp of DNA. Acetylation at Lys-6 (H4K5ac), Lys-9 (H4K8ac), Lys-13 (H4K12ac) and Lys-17 (H4K16ac) occurs in coding regions of the genome but not in heterochromatin. Post-translationally, citrullination at Arg-4 (H4R3ci) by PADI4 impairs methylation. In terms of processing, monomethylation and asymmetric dimethylation at Arg-4 (H4R3me1 and H4R3me2a, respectively) by PRMT1 favors acetylation at Lys-9 (H4K8ac) and Lys-13 (H4K12ac). Demethylation is performed by JMJD6. Symmetric dimethylation on Arg-4 (H4R3me2s) by the PRDM1/PRMT5 complex may play a crucial role in the germ-cell lineage. Monomethylated, dimethylated or trimethylated at Lys-21 (H4K20me1, H4K20me2, H4K20me3). Monomethylation is performed by KMT5A/SET8. Trimethylation is performed by KMT5B and KMT5C and induces gene silencing. Monomethylated at Lys-13 (H4K12me1) by N6AMT1; H4K12me1 modification is present at the promoters of numerous genes encoding cell cycle regulators. Post-translationally, acetyl-methylated at Lys-6 and Lys-13 (H4K5acme and H4K12acme, respectively), acetyl-methylation is an epigenetic mark of active chromatin associated with increased transcriptional initiation. Acetyl-methylation is formed by acetylation by EP300/p300 of lysine residues that are already monomethylated on the same side chain. H4K5acme and H4K12acme marks specifically bind BRD2. In terms of processing, ubiquitinated by the CUL4-DDB-RBX1 complex in response to ultraviolet irradiation. This may weaken the interaction between histones and DNA and facilitate DNA accessibility to repair proteins. Monoubiquitinated at Lys-92 of histone H4 (H4K91ub1) in response to DNA damage. The exact role of H4K91ub1 in DNA damage response is still unclear but it may function as a licensing signal for additional histone H4 post-translational modifications such as H4 Lys-21 methylation (H4K20me). Sumoylated, which is associated with transcriptional repression. Post-translationally, butyrylation of histones marks active promoters and competes with histone acetylation. In terms of processing, glutarylation at Lys-92 (H4K91glu) destabilizes nucleosomes by promoting dissociation of the H2A-H2B dimers from nucleosomes. Ufmylated; monofmylated by UFL1 at Lys-32 (H4K31Ufm1) in response to DNA damage. Post-translationally, lactylated in macrophages by EP300/P300 by using lactoyl-CoA directly derived from endogenous or exogenous lactate, leading to stimulates gene transcription. Delactylated by SIRT3 at Lys-17 (H4K16la).

The protein localises to the nucleus. It is found in the chromosome. Functionally, core component of nucleosome. Nucleosomes wrap and compact DNA into chromatin, limiting DNA accessibility to the cellular machineries which require DNA as a template. Histones thereby play a central role in transcription regulation, DNA repair, DNA replication and chromosomal stability. DNA accessibility is regulated via a complex set of post-translational modifications of histones, also called histone code, and nucleosome remodeling. This chain is Histone H4 type VIII (H4-VIII), found in Gallus gallus (Chicken).